Consider the following 190-residue polypeptide: UPF0301 protein TC_0483 (190 aa).

This sequence belongs to the UPF0301 (AlgH) family.

This is UPF0301 protein TC_0483 from Chlamydia muridarum (strain MoPn / Nigg).